The sequence spans 246 residues: Bis(5'-nucleosyl)-tetraphosphatase PrpE [asymmetrical] (246 aa).

It belongs to the PrpE family. Ni(2+) serves as cofactor.

The enzyme catalyses P(1),P(4)-bis(5'-guanosyl) tetraphosphate + H2O = GMP + GTP + 2 H(+). Asymmetrically hydrolyzes Ap4p to yield AMP and ATP. The sequence is that of Bis(5'-nucleosyl)-tetraphosphatase PrpE [asymmetrical] from Bacillus cereus (strain AH820).